Reading from the N-terminus, the 122-residue chain is Large ribosomal subunit protein uL14 (122 aa).

The protein belongs to the universal ribosomal protein uL14 family. In terms of assembly, part of the 50S ribosomal subunit. Forms a cluster with proteins L3 and L19. In the 70S ribosome, L14 and L19 interact and together make contacts with the 16S rRNA in bridges B5 and B8.

In terms of biological role, binds to 23S rRNA. Forms part of two intersubunit bridges in the 70S ribosome. This is Large ribosomal subunit protein uL14 from Hydrogenovibrio crunogenus (strain DSM 25203 / XCL-2) (Thiomicrospira crunogena).